The following is a 510-amino-acid chain: Sucrose transport protein SUC4 (510 aa).

A disordered region spans residues 1–34 (MATSDQDRRHRVTRNRPPIARPSTSSSRPVVSPP). Over 1–45 (MATSDQDRRHRVTRNRPPIARPSTSSSRPVVSPPRSKVSKRVLLR) the chain is Cytoplasmic. A compositionally biased stretch (low complexity) spans 21–34 (RPSTSSSRPVVSPP). Phosphoserine is present on serine 23. Residues 46 to 66 (VASVACGIQFGWALQLSLLTP) traverse the membrane as a helical segment. The Extracellular segment spans residues 67–71 (YVQEL). Residues 72-92 (GIPHAWASVIWLCGPLSGLFV) form a helical membrane-spanning segment. Residues 93–111 (QPLVGHSSDRCTSKYGRRR) lie on the Cytoplasmic side of the membrane. The chain crosses the membrane as a helical span at residues 112-132 (PFIVAGAVAISISVMVIGHAA). Residues 133-148 (DIGWAFGDREGKIKPR) are Extracellular-facing. Residues 149–169 (AIVAFVLGFWILDVANNMTQG) form a helical membrane-spanning segment. Topologically, residues 170–187 (PCRALLADLTENDNRRTR) are cytoplasmic. The chain crosses the membrane as a helical span at residues 188-208 (VANGYFSLFMAVGNVLGYATG). The Extracellular segment spans residues 209–233 (SYNGWYKIFTFTKTVACNVECANLK). Residues 234 to 254 (SAFYIDVVFIAITTILSVSAA) traverse the membrane as a helical segment. Residues 255–291 (HEVPLASLASEAHGQTSGTDEAFLSEIFGTFRYFPGN) are Cytoplasmic-facing. The helical transmembrane segment at 292-312 (VWIILLVTALTWIGWFPFILF) threads the bilayer. The Extracellular segment spans residues 313-335 (DTDWMGREIYGGEPNIGTSYSAG). A helical membrane pass occupies residues 336-356 (VSMGALGLMLNSVFLGITSVL). Residues 357-365 (MEKLCRKWG) lie on the Cytoplasmic side of the membrane. The helical transmembrane segment at 366 to 386 (AGFVWGISNILMAICFLGMII) threads the bilayer. The Extracellular segment spans residues 387–402 (TSFVASHLGYIGHEQP). Residues 403–423 (PASIVFAAVLIFTILGIPLAI) traverse the membrane as a helical segment. Topologically, residues 424-443 (TYSVPYALISIRIESLGLGQ) are cytoplasmic. A helical membrane pass occupies residues 444–464 (GLSLGVLNLAIVIPQVIVSVG). Over 465-477 (SGPWDQLFGGGNS) the chain is Extracellular. A helical transmembrane segment spans residues 478 to 498 (PALAVGAATGFIGGIVAILAL). Residues 499–510 (PRTRIQKPIPLP) lie on the Cytoplasmic side of the membrane.

It belongs to the glycoside-pentoside-hexuronide (GPH) cation symporter transporter (TC 2.A.2.4) family. In terms of assembly, homodimer. Interacts with SUC2 and SUC3. Expressed in sink tissues, mostly in minor veins of sink leaves. Localized in companion cells.

Its subcellular location is the cell membrane. The catalysed reaction is sucrose(out) + H(+)(out) = sucrose(in) + H(+)(in). The protein operates within glycan biosynthesis; sucrose metabolism. Functionally, responsible for the transport of sucrose into the cell, with the concomitant uptake of protons (symport system). Can also transport maltose at a lesser rate. May also transport biotin. This Arabidopsis thaliana (Mouse-ear cress) protein is Sucrose transport protein SUC4.